Here is a 194-residue protein sequence, read N- to C-terminus: CASP-like protein 1B1 (194 aa).

Over 1-24 the chain is Cytoplasmic; the sequence is MASENGDKLELAFSAVPDPKPKKD. The helical transmembrane segment at 25-45 threads the bilayer; it reads WVILSLRVVAFFATASATLVM. Residues 46–77 lie on the Extracellular side of the membrane; it reads AFNKQTKGMVVATIGTNPVTITLTAMFQHTPA. The chain crosses the membrane as a helical span at residues 78–98; it reads FIFFVIVNAIASFYNLLVIGV. Topologically, residues 99–111 are cytoplasmic; the sequence is EILGPQYDYKGLR. The chain crosses the membrane as a helical span at residues 112–132; sequence LGLIAILDVMTMALAATGDGA. Residues 133 to 164 are Extracellular-facing; sequence ATFMAELGRNGNSHARWDKICDKFEAYCNRGG. The chain crosses the membrane as a helical span at residues 165–185; sequence VALVASFVGLILLLVVTVMSI. At 186-194 the chain is on the cytoplasmic side; the sequence is TKLLKLNRI.

The protein belongs to the Casparian strip membrane proteins (CASP) family. In terms of assembly, homodimer and heterodimers.

The protein localises to the cell membrane. This is CASP-like protein 1B1 from Glycine max (Soybean).